Consider the following 312-residue polypeptide: Ribosomal RNA small subunit methyltransferase H (312 aa).

S-adenosyl-L-methionine is bound by residues 35–37 (GGH), D55, F79, D101, and Q108.

This sequence belongs to the methyltransferase superfamily. RsmH family.

The protein localises to the cytoplasm. The catalysed reaction is cytidine(1402) in 16S rRNA + S-adenosyl-L-methionine = N(4)-methylcytidine(1402) in 16S rRNA + S-adenosyl-L-homocysteine + H(+). Functionally, specifically methylates the N4 position of cytidine in position 1402 (C1402) of 16S rRNA. The protein is Ribosomal RNA small subunit methyltransferase H of Glaesserella parasuis serovar 5 (strain SH0165) (Haemophilus parasuis).